The sequence spans 206 residues: Large ribosomal subunit protein uL4 (206 aa).

The segment at 63 to 97 (MYKQKGTGRARHHSARAPQFRGGGKAHGPVVRSHE) is disordered. Positions 64–77 (YKQKGTGRARHHSA) are enriched in basic residues.

This sequence belongs to the universal ribosomal protein uL4 family. Part of the 50S ribosomal subunit.

One of the primary rRNA binding proteins, this protein initially binds near the 5'-end of the 23S rRNA. It is important during the early stages of 50S assembly. It makes multiple contacts with different domains of the 23S rRNA in the assembled 50S subunit and ribosome. In terms of biological role, forms part of the polypeptide exit tunnel. This Rhizobium johnstonii (strain DSM 114642 / LMG 32736 / 3841) (Rhizobium leguminosarum bv. viciae) protein is Large ribosomal subunit protein uL4.